The primary structure comprises 123 residues: Large ribosomal subunit protein uL29 (123 aa).

Positions 84–123 (RPKKTRAMRRRLNKHEEGLKTKKQQRKERLYPPRKYAVKA) are disordered. The span at 86-96 (KKTRAMRRRLN) shows a compositional bias: basic residues.

It belongs to the universal ribosomal protein uL29 family. As to quaternary structure, component of the large ribosomal subunit.

It localises to the cytoplasm. Functionally, component of the large ribosomal subunit. The ribosome is a large ribonucleoprotein complex responsible for the synthesis of proteins in the cell. This Ophiophagus hannah (King cobra) protein is Large ribosomal subunit protein uL29 (RPL35).